The primary structure comprises 295 residues: Putative ribose uptake protein RbsU (295 aa).

10 helical membrane passes run 5–24, 34–56, 63–80, 95–114, 121–139, 154–171, 183–205, 220–237, 244–266, and 276–293; these read ALLI…TIAS, ILGT…GLAF, FFSI…IITF, TTAF…LGNW, LLGA…MTVW, AVLL…YSAA, FLPQ…TIKG, IFSG…LISA, LATG…IWFL, and TVTI…TITV.

Belongs to the GRP transporter (TC 2.A.7.5) family.

It localises to the cell membrane. In terms of biological role, could be involved in the uptake of ribose. This chain is Putative ribose uptake protein RbsU (rbsU), found in Enterococcus faecalis (strain ATCC 700802 / V583).